The primary structure comprises 329 residues: UDP-2,3-diacylglucosamine pyrophosphatase LpxG (329 aa).

A helical membrane pass occupies residues 2–24 (FVFVGSTVSLTAIVAAPVLTWIW). A divalent metal cation contacts are provided by D59, H61, D91, N123, H257, and H259.

Belongs to the metallophosphoesterase superfamily. The cofactor is Mn(2+).

The protein resides in the cell inner membrane. The enzyme catalyses UDP-2,3-diacyl-alpha-D-glucosamine + H2O = 2,3-diacyl-alpha-D-glucosaminyl 1-phosphate + UMP + 2 H(+). It functions in the pathway glycolipid biosynthesis; lipid IV(A) biosynthesis. In terms of biological role, hydrolyzes the pyrophosphate bond of UDP-2,3-diacylglucosamine to form 2,3-diacylglucosamine 1-phosphate (lipid X) and UMP by catalyzing the attack of water at the alpha-P atom. Involved in the biosynthesis of lipid A, a phosphorylated glycolipid that anchors the lipooligosaccharide (LOS) to the outer membrane of the cell. In Chlamydia muridarum (strain MoPn / Nigg), this protein is UDP-2,3-diacylglucosamine pyrophosphatase LpxG.